We begin with the raw amino-acid sequence, 581 residues long: Rhodanese-like domain-containing protein 6 (581 aa).

The 101-residue stretch at 158–258 (ENKELVLLDA…YLEQFPSGGF (101 aa)) folds into the Rhodanese domain. Catalysis depends on Cys-216, which acts as the Cysteine persulfide intermediate.

The chain is Rhodanese-like domain-containing protein 6 (STR6) from Arabidopsis thaliana (Mouse-ear cress).